Consider the following 155-residue polypeptide: Endoribonuclease YbeY (155 aa).

H114, H118, and H124 together coordinate Zn(2+).

It belongs to the endoribonuclease YbeY family. The cofactor is Zn(2+).

It is found in the cytoplasm. In terms of biological role, single strand-specific metallo-endoribonuclease involved in late-stage 70S ribosome quality control and in maturation of the 3' terminus of the 16S rRNA. The sequence is that of Endoribonuclease YbeY from Tolumonas auensis (strain DSM 9187 / NBRC 110442 / TA 4).